The following is a 513-amino-acid chain: Na(+)/H(+) antiporter NhaB (513 aa).

A run of 12 helical transmembrane segments spans residues Ile-21–Val-41, Gln-64–Val-84, Ile-88–Met-108, Leu-119–Phe-139, Phe-143–Val-163, Leu-202–Pro-222, Leu-243–Phe-263, Met-299–Ala-318, Ile-322–Gly-344, Pro-350–Leu-370, Leu-389–Gly-409, and Met-477–Leu-497.

The protein belongs to the NhaB Na(+)/H(+) (TC 2.A.34) antiporter family.

The protein resides in the cell inner membrane. The enzyme catalyses 2 Na(+)(in) + 3 H(+)(out) = 2 Na(+)(out) + 3 H(+)(in). Functionally, na(+)/H(+) antiporter that extrudes sodium in exchange for external protons. The polypeptide is Na(+)/H(+) antiporter NhaB (Actinobacillus pleuropneumoniae serotype 3 (strain JL03)).